The sequence spans 655 residues: MAKGGEALPQGSPAPVQDPHLIKVTVKTPKDKEDFSVTDTCTIQQLKEEISQRFKAHPDQLVLIFAGKILKDPDSLAQCGVRDGLTVHLVIKRQHRAMGNECPAASVPTQGPSPGSLPQPSSIYPADGPPAFSLGLLTGLSRLGLAYRGFPDQPSSLMRQHVSVPEFVTQLIDDPFIPGLLSNTGLVRQLVLDNPHMQQLIQHNPEIGHILNNPEIMRQTLEFLRNPAMMQEMIRSQDRVLSNLESIPGGYNVLCTMYTDIMDPMLNAVQEQFGGNPFATATTDNATTTTSQPSRMENCDPLPNPWTSTHGGSGSRQGRQDGDQDAPDIRNRFPNFLGIIRLYDYLQQLHENPQSLGTYLQGTASALSQSQEPPPSVNRVPPSSPSSQEPGSGQPLPEESVAIKGRSSCPAFLRYPTENSTGQGGDQDGAGKSSTGHSTNLPDLVSGLGDSANRVPFAPLSFSPTAAIPGIPEPPWLPSPAYPRSLRPDGMNPAPQLQDEIQPQLPLLMHLQAAMANPRALQALRQIEQGLQVLATEAPRLLLWFMPCLAGTGSVAGGIESREDPLMSEDPLPNPPPEVFPALDSAELGFLSPPFLHMLQDLVSTNPQQLQPEAHFQVQLEQLRSMGFLNREANLQALIATGGDVDAAVEKLRQS.

In terms of domain architecture, Ubiquitin-like spans 22–98; the sequence is IKVTVKTPKD…LVIKRQHRAM (77 aa). Residues 102–124 form a disordered region; the sequence is CPAASVPTQGPSPGSLPQPSSIY. A compositionally biased stretch (low complexity) spans 110–122; the sequence is QGPSPGSLPQPSS. The STI1 domain maps to 194–233; it reads NPHMQQLIQHNPEIGHILNNPEIMRQTLEFLRNPAMMQEM. Disordered regions lie at residues 277 to 330, 364 to 399, and 412 to 447; these read PFAT…PDIR, ASALSQSQEPPPSVNRVPPSSPSSQEPGSGQPLPEE, and FLRYPTENSTGQGGDQDGAGKSSTGHSTNLPDLVSG. Residues 279–290 are compositionally biased toward low complexity; it reads ATATTDNATTTT. The span at 318-330 shows a compositional bias: basic and acidic residues; that stretch reads GRQDGDQDAPDIR. Low complexity predominate over residues 377–395; it reads VNRVPPSSPSSQEPGSGQP. Over residues 432-441 the composition is skewed to polar residues; the sequence is KSSTGHSTNL. The region spanning 609–655 is the UBA domain; the sequence is QLQPEAHFQVQLEQLRSMGFLNREANLQALIATGGDVDAAVEKLRQS.

As to expression, testis specific.

The protein is Ubiquilin-3 (UBQLN3) of Homo sapiens (Human).